The sequence spans 752 residues: MSSRTVLAPGNDRNSDTHGTLGSGRSSDKGPSWSSRSLGARCRNSIASCPEEQPHVGNYRLLRTIGKGNFAKVKLARHILTGREVAIKIIDKTQLNPSSLQKLFREVRIMKGLNHPNIVKLFEVIETEKTLYLVMEYASAGEVFDYLVSHGRMKEKEARAKFRQIVSAVHYCHQKNIVHRDLKAENLLLDAEANIKIADFGFSNEFTLGSKLDTFCGSPPYAAPELFQGKKYDGPEVDIWSLGVILYTLVSGSLPFDGHNLKELRERVLRGKYRVPFYMSTDCESILRRFLVLNPAKRCTLEQIMKDKWINIGYEGEELKPYTEPEEDFGDTKRIEVMVGMGYTREEIKESLTSQKYNEVTATYLLLGRKTEEGGDRGAPGLALARVRAPSDTTNGTSSSKGTSHSKGQRSSSSTYHRQRRHSDFCGPSPAPLHPKRSPTSTGEAELKEERLPGRKASCSTAGSGSRGLPPSSPMVSSAHNPNKAEIPERRKDSTSTPNNLPPSMMTRRNTYVCTERPGAERPSLLPNGKENSSGTPRVPPASPSSHSLAPPSGERSRLARGSTIRSTFHGGQVRDRRAGGGGGGGVQNGPPASPTLAHEAAPLPAGRPRPTTNLFTKLTSKLTRRVADEPERIGGPEVTSCHLPWDQTETAPRLLRFPWSVKLTSSRPPEALMAALRQATAAARCRCRQPQPFLLACLHGGAGGPEPLSHFEVEVCQLPRPGLRGVLFRRVAGTALAFRTLVTRISNDLEL.

Residues 1–36 are disordered; the sequence is MSSRTVLAPGNDRNSDTHGTLGSGRSSDKGPSWSSR. The 252-residue stretch at 59 to 310 folds into the Protein kinase domain; that stretch reads YRLLRTIGKG…LEQIMKDKWI (252 aa). Residues 65–73 and Lys88 each bind ATP; that span reads IGKGNFAKV. Residue Asp181 is the Proton acceptor of the active site. Thr214 carries the phosphothreonine; by LKB1 modification. In terms of domain architecture, UBA spans 324–368; the sequence is EPEEDFGDTKRIEVMVGMGYTREEIKESLTSQKYNEVTATYLLLG. The interval 385–614 is disordered; sequence ARVRAPSDTT…PAGRPRPTTN (230 aa). The segment covering 391–406 has biased composition (low complexity); sequence SDTTNGTSSSKGTSHS. A phosphoserine mark is found at Ser423 and Ser543. The segment covering 544-553 has biased composition (low complexity); the sequence is PSSHSLAPPS. The KA1 domain maps to 703 to 752; it reads AGGPEPLSHFEVEVCQLPRPGLRGVLFRRVAGTALAFRTLVTRISNDLEL.

Belongs to the protein kinase superfamily. CAMK Ser/Thr protein kinase family. SNF1 subfamily. In terms of assembly, interacts with MAPT/TAU. Interacts with gamma-tubulin. Interacts with ODF2. Interacts with USP9X. Interacts with YWHAQ. Interacts with NLRP3; promoting NLRP3 recruitment to microtubule organizing center (MTOC). Mg(2+) is required as a cofactor. In terms of processing, ubiquitinated with 'Lys-29'- and 'Lys-33'-linked polyubiquitins which appear to impede LKB1-mediated phosphorylation. Deubiquitinated by USP9X. Phosphorylated at Thr-214 by STK11/LKB1 in complex with STE20-related adapter-alpha (STRADA) pseudo kinase and CAB39. Phosphorylated throughout the cell cycle. As to expression, ubiquitous. Isoform 2 is brain-specific. Expressed at highest levels in brain and testis. Also expressed in heart, lung, liver, muscle, kidney and spleen.

The protein resides in the cytoplasm. It is found in the cytoskeleton. The protein localises to the microtubule organizing center. It localises to the centrosome. Its subcellular location is the cilium basal body. The protein resides in the cilium axoneme. It is found in the cell projection. The protein localises to the dendrite. It carries out the reaction L-seryl-[protein] + ATP = O-phospho-L-seryl-[protein] + ADP + H(+). The catalysed reaction is L-threonyl-[protein] + ATP = O-phospho-L-threonyl-[protein] + ADP + H(+). Activated by phosphorylation on Thr-214. Functionally, serine/threonine-protein kinase. Phosphorylates the microtubule-associated protein MAPT/TAU. Also phosphorylates the microtubule-associated proteins MAP2 and MAP4. Involved in regulation of the microtubule network, causing reorganization of microtubules into bundles. Required for the initiation of axoneme extension during cilium assembly. Regulates the centrosomal location of ODF2 and phosphorylates ODF2 in vitro. Plays a role in cell cycle progression, specifically in the G1/S checkpoint. Reduces neuronal cell survival. Plays a role in energy homeostasis by regulating satiety and metabolic rate. Promotes adipogenesis by activating JNK1 and inhibiting the p38MAPK pathway, and triggers apoptosis by activating the JNK1 pathway. Phosphorylates mTORC1 complex member RPTOR and acts as a negative regulator of the mTORC1 complex, probably due to disruption of the interaction between phosphorylated RPTOR and the RRAGA/RRAGC heterodimer which is required for mTORC1 activation. Involved in NLRP3 positioning along microtubules by mediating NLRP3 recruitment to microtubule organizing center (MTOC) upon inflammasome activation. This chain is MAP/microtubule affinity-regulating kinase 4, found in Homo sapiens (Human).